The primary structure comprises 475 residues: Aspartyl/glutamyl-tRNA(Asn/Gln) amidotransferase subunit B (475 aa).

It belongs to the GatB/GatE family. GatB subfamily. In terms of assembly, heterotrimer of A, B and C subunits.

The enzyme catalyses L-glutamyl-tRNA(Gln) + L-glutamine + ATP + H2O = L-glutaminyl-tRNA(Gln) + L-glutamate + ADP + phosphate + H(+). It carries out the reaction L-aspartyl-tRNA(Asn) + L-glutamine + ATP + H2O = L-asparaginyl-tRNA(Asn) + L-glutamate + ADP + phosphate + 2 H(+). Its function is as follows. Allows the formation of correctly charged Asn-tRNA(Asn) or Gln-tRNA(Gln) through the transamidation of misacylated Asp-tRNA(Asn) or Glu-tRNA(Gln) in organisms which lack either or both of asparaginyl-tRNA or glutaminyl-tRNA synthetases. The reaction takes place in the presence of glutamine and ATP through an activated phospho-Asp-tRNA(Asn) or phospho-Glu-tRNA(Gln). In Chlorobium limicola (strain DSM 245 / NBRC 103803 / 6330), this protein is Aspartyl/glutamyl-tRNA(Asn/Gln) amidotransferase subunit B.